A 768-amino-acid chain; its full sequence is Telomere repeats-binding bouquet formation protein 1 (768 aa).

2 ARM repeats span residues Glu-101–Gly-145 and Asn-341–Ser-384. The stretch at Glu-399–Asn-448 forms a coiled coil. 2 stretches are compositionally biased toward basic and acidic residues: residues Gly-422–Asp-436 and Arg-461–Ser-475. 2 disordered regions span residues Gly-422 to Met-441 and Ala-454 to Ser-475. Residues Gln-524–Pro-700 form an interaction with TERF1 region. At Thr-648 the chain carries Phosphothreonine. One can recognise a Myb-like domain in the interval Lys-707 to Ile-760.

It belongs to the TERB1 family. Component of the MAJIN-TERB1-TERB2 complex, composed of MAJIN, TERB1 and TERB2. Interacts with TERF1, STAG3 and SUN1. Interacts (via Myb-like domain) with the cohesin complex; probably mediated via interaction with STAG3. In terms of processing, phosphorylated by CDK. Phosphorylation by CDK takes place in late prophase when the cap exchange is prominent. is important for the stabilization of telomere attachment but dispenable for the cap exchange. In terms of tissue distribution, expressed in testis and fetal oocytes.

The protein localises to the chromosome. The protein resides in the telomere. Its subcellular location is the nucleus inner membrane. Meiosis-specific telomere-associated protein involved in meiotic telomere attachment to the nucleus inner membrane, a crucial step for homologous pairing and synapsis. Component of the MAJIN-TERB1-TERB2 complex, which promotes telomere cap exchange by mediating attachment of telomeric DNA to the inner nuclear membrane and replacement of the protective cap of telomeric chromosomes: in early meiosis, the MAJIN-TERB1-TERB2 complex associates with telomeric DNA and the shelterin/telosome complex. During prophase, the complex matures and promotes release of the shelterin/telosome complex from telomeric DNA. In the MAJIN-TERB1-TERB2 complex, TERB1 probably mediates association with the shelterin/telosome complex via interaction with TERF1, promoting priming telomeric DNA attachment'. Promotes telomere association with the nuclear envelope and deposition of the SUN-KASH/LINC complex. Also recruits cohesin to telomeres to develop structural rigidity. This Mus musculus (Mouse) protein is Telomere repeats-binding bouquet formation protein 1.